A 623-amino-acid chain; its full sequence is Chaperone protein DnaK (623 aa).

Over residues 582 to 603 the composition is skewed to low complexity; that stretch reads QQQQAAEQAAQQQSGGQQASGS. The disordered stretch occupies residues 582 to 623; sequence QQQQAAEQAAQQQSGGQQASGSNPGKDPNVVDADYEVVNDKK. The span at 614 to 623 shows a compositional bias: acidic residues; the sequence is ADYEVVNDKK.

The protein belongs to the heat shock protein 70 family.

Its function is as follows. Acts as a chaperone. The protein is Chaperone protein DnaK of Methanocella arvoryzae (strain DSM 22066 / NBRC 105507 / MRE50).